The sequence spans 100 residues: Urease subunit gamma (100 aa).

It belongs to the urease gamma subunit family. In terms of assembly, heterotrimer of UreA (gamma), UreB (beta) and UreC (alpha) subunits. Three heterotrimers associate to form the active enzyme.

It localises to the cytoplasm. It catalyses the reaction urea + 2 H2O + H(+) = hydrogencarbonate + 2 NH4(+). The protein operates within nitrogen metabolism; urea degradation; CO(2) and NH(3) from urea (urease route): step 1/1. The protein is Urease subunit gamma of Marinobacter nauticus (strain ATCC 700491 / DSM 11845 / VT8) (Marinobacter aquaeolei).